The primary structure comprises 89 residues: Small ribosomal subunit protein uS15 (89 aa).

This sequence belongs to the universal ribosomal protein uS15 family. In terms of assembly, part of the 30S ribosomal subunit. Forms a bridge to the 50S subunit in the 70S ribosome, contacting the 23S rRNA.

Its function is as follows. One of the primary rRNA binding proteins, it binds directly to 16S rRNA where it helps nucleate assembly of the platform of the 30S subunit by binding and bridging several RNA helices of the 16S rRNA. Functionally, forms an intersubunit bridge (bridge B4) with the 23S rRNA of the 50S subunit in the ribosome. The chain is Small ribosomal subunit protein uS15 from Synechococcus elongatus (strain ATCC 33912 / PCC 7942 / FACHB-805) (Anacystis nidulans R2).